A 160-amino-acid polypeptide reads, in one-letter code: Troponin C, skeletal muscle (160 aa).

N-acetylthreonine is present on threonine 2. EF-hand domains are found at residues 15-50, 51-86, 91-126, and 127-160; these read EMIA…LGQT, PTKE…QMKE, KSEE…SGEH, and VTDE…EGVQ. 19 residues coordinate Ca(2+): aspartate 28, aspartate 30, aspartate 34, glutamate 39, aspartate 64, aspartate 66, serine 68, threonine 70, glutamate 75, aspartate 104, asparagine 106, aspartate 108, tyrosine 110, glutamate 115, aspartate 140, asparagine 142, aspartate 144, arginine 146, and glutamate 151.

This sequence belongs to the troponin C family.

In terms of biological role, troponin is the central regulatory protein of striated muscle contraction. Tn consists of three components: Tn-I which is the inhibitor of actomyosin ATPase, Tn-T which contains the binding site for tropomyosin and Tn-C. The binding of calcium to Tn-C abolishes the inhibitory action of Tn on actin filaments. The polypeptide is Troponin C, skeletal muscle (TNNC2) (Homo sapiens (Human)).